The following is a 539-amino-acid chain: Probable K(+)/H(+) antiporter subunit D (539 aa).

Transmembrane regions (helical) follow at residues W4 to L23, A36 to A58, F78 to L100, A113 to G135, L140 to L162, L175 to M197, M217 to L239, A251 to F273, F283 to A305, L312 to G331, M335 to I357, V400 to I422, A442 to A464, and V484 to A506.

The protein belongs to the CPA3 antiporters (TC 2.A.63) subunit D family. May form a hetero-oligomeric complex that consists of six subunits: PhaAB, PhaC, PhaD, PhaE, PhaF and PhaG.

The protein localises to the cell membrane. Its function is as follows. Part of a K(+) efflux system which is required for the adaptation of R.meliloti to alkaline pH as well as for the infection process during symbiotic nodule development. The protein is Probable K(+)/H(+) antiporter subunit D (phaD) of Rhizobium meliloti (strain 1021) (Ensifer meliloti).